A 635-amino-acid polypeptide reads, in one-letter code: Threonine--tRNA ligase (635 aa).

Residues 1-61 form the TGS domain; it reads MIKITLKDGS…KEDAALELLT (61 aa). A catalytic region spans residues 242–532; that stretch reads DHRKLGQELD…LTEHFAGAFP (291 aa). Residues Cys333, His384, and His509 each coordinate Zn(2+).

It belongs to the class-II aminoacyl-tRNA synthetase family. In terms of assembly, homodimer. Zn(2+) is required as a cofactor.

It is found in the cytoplasm. It catalyses the reaction tRNA(Thr) + L-threonine + ATP = L-threonyl-tRNA(Thr) + AMP + diphosphate + H(+). Its function is as follows. Catalyzes the attachment of threonine to tRNA(Thr) in a two-step reaction: L-threonine is first activated by ATP to form Thr-AMP and then transferred to the acceptor end of tRNA(Thr). Also edits incorrectly charged L-seryl-tRNA(Thr). The sequence is that of Threonine--tRNA ligase from Desulforamulus reducens (strain ATCC BAA-1160 / DSM 100696 / MI-1) (Desulfotomaculum reducens).